The sequence spans 381 residues: GDP-mannose transporter (381 aa).

The Cytoplasmic segment spans residues 1 to 39 (MVESKKTDDYAIEMDKIDQGSKNFEAAAPPQPRSVPSSS). Residues 40-60 (LSGNPVLPVLAYCGSSILMTV) form a helical membrane-spanning segment. The Lumenal segment spans residues 61–68 (MNKYVLSG). The helical transmembrane segment at 69-89 (LDFNLNFFLLCVQSIVCIIAI) threads the bilayer. At 90-109 (QTCKFCGLITYRDFSADEAK) the chain is on the cytoplasmic side. A helical membrane pass occupies residues 110 to 126 (KWFPISLLLIGMIYTGS). Residues 127–133 (KALQFLS) are Lumenal-facing. A helical membrane pass occupies residues 134-150 (IPVYTIFKNLTIILIAY). Residues 151–159 (GEVLWFGGS) lie on the Cytoplasmic side of the membrane. A helical membrane pass occupies residues 160–181 (VTGLTLFSFGLMVLSSIIAAWA). Residues 182–199 (DIKHAVESSGDTSAQVST) lie on the Lumenal side of the membrane. A helical transmembrane segment spans residues 200–220 (LNAGYIWMLINCLCTSSYVLG). Over 221–232 (MRKRIKLTNFKD) the chain is Cytoplasmic. Residues 233 to 253 (FDTMFYNNLLSIPVLVVLTGL) form a helical membrane-spanning segment. Residues 254–273 (MEDWSSANIDRNFPQADRSS) lie on the Lumenal side of the membrane. A helical membrane pass occupies residues 274–294 (IMFAMILSGLSSVFISYTSAW). Residues 295–302 (CVRVTSST) are Cytoplasmic-facing. A helical transmembrane segment spans residues 303 to 323 (TYSMVGALNKLPIALSGLIFF). The Lumenal portion of the chain corresponds to 324 to 326 (DAP). Residues 327 to 347 (VTFPSVSAIAVGFVSGIVYAI) traverse the membrane as a helical segment. The Cytoplasmic portion of the chain corresponds to 348 to 381 (AKIKQNAKPKTGVLPTSNPLVSASSQSMRDSLRS).

It belongs to the TPT transporter family. SLC35D subfamily. As to quaternary structure, homooligomer.

It is found in the golgi apparatus membrane. Its subcellular location is the cytoplasmic vesicle membrane. The protein localises to the endoplasmic reticulum membrane. In terms of biological role, involved in the import of GDP-mannose from the cytoplasm into the Golgi lumen. This Aspergillus oryzae (strain ATCC 42149 / RIB 40) (Yellow koji mold) protein is GDP-mannose transporter (gmt1).